The chain runs to 692 residues: MARKTPLNRIRNIGIAAHIDAGKTTTSERILFYTGVSHKIGEVHDGAATMDWMEQEKERGITITSAATTCFWKDHQINLIDTPGHVDFTIEVERSMRVLDGAVSVFCSVGGVQPQSETVWRQANKYGVPRIVFVNKMDRIGANFYNVENQIKLRLKANPVPINIPIGAEDTFIGVIDLVQMKAIVWNNETMGAKYDVEEIPSDLLEKAKEYREKLVEAVAEQDEALMEKYLGGEELSIEEIKKGIKAGCLNMSLVPMLCGSSFKNKGVQTLLDAVIDYLPAPTEVVDIKGIDPKTEEEVFVKSSDDGEFAGLAFKIMTDPFVGQLTFVRVYRGKLESGSYVYNSTKDKKERVGRLLKMHSNKREDIKEVYAGEICAFVGLKDTLTGDTLCDEKNAVVLERMEFPEPVIHIAVEPKTKADQEKMGVALGKLAEEDPSFRVMTQEETGQTLIGGMGELHLEIIVDRLKREFKVEAEIGQPQVAFRETIRSSVSKEHKYAKQSGGRGQYGHVFIKLEPKEPGSGYEFVNEISGGVIPKEYIPAVDKGIQEAMQNGVLAGYPVVDFKVTLYDGSYHDVDSSEMAFKIAGSMAFKEASRAANPVLLEPMMKVEVEVPEEYMGDVIGDLNRRRGQINSMDDRLGLKIVNAFVPLVEMFGYSTDLRSATQGRGTYSMEFDHYGEVPSNIAKEIVEKRKG.

The 276-residue stretch at 8 to 283 (NRIRNIGIAA…AVIDYLPAPT (276 aa)) folds into the tr-type G domain. GTP contacts are provided by residues 17–24 (AHIDAGKT), 81–85 (DTPGH), and 135–138 (NKMD).

This sequence belongs to the TRAFAC class translation factor GTPase superfamily. Classic translation factor GTPase family. EF-G/EF-2 subfamily.

It localises to the cytoplasm. In terms of biological role, catalyzes the GTP-dependent ribosomal translocation step during translation elongation. During this step, the ribosome changes from the pre-translocational (PRE) to the post-translocational (POST) state as the newly formed A-site-bound peptidyl-tRNA and P-site-bound deacylated tRNA move to the P and E sites, respectively. Catalyzes the coordinated movement of the two tRNA molecules, the mRNA and conformational changes in the ribosome. This is Elongation factor G (fusA) from Helicobacter pylori (strain ATCC 700392 / 26695) (Campylobacter pylori).